A 202-amino-acid chain; its full sequence is Orotate phosphoribosyltransferase (202 aa).

113–121 is a 5-phospho-alpha-D-ribose 1-diphosphate binding site; that stretch reads EDIITTGGS. Residues T117 and R145 each contribute to the orotate site.

The protein belongs to the purine/pyrimidine phosphoribosyltransferase family. PyrE subfamily. Homodimer. Requires Mg(2+) as cofactor.

The enzyme catalyses orotidine 5'-phosphate + diphosphate = orotate + 5-phospho-alpha-D-ribose 1-diphosphate. It participates in pyrimidine metabolism; UMP biosynthesis via de novo pathway; UMP from orotate: step 1/2. Its function is as follows. Catalyzes the transfer of a ribosyl phosphate group from 5-phosphoribose 1-diphosphate to orotate, leading to the formation of orotidine monophosphate (OMP). In Sulfurimonas denitrificans (strain ATCC 33889 / DSM 1251) (Thiomicrospira denitrificans (strain ATCC 33889 / DSM 1251)), this protein is Orotate phosphoribosyltransferase.